The chain runs to 183 residues: Ribosome-recycling factor (183 aa).

Belongs to the RRF family.

It is found in the cytoplasm. Its function is as follows. Responsible for the release of ribosomes from messenger RNA at the termination of protein biosynthesis. May increase the efficiency of translation by recycling ribosomes from one round of translation to another. In Ureaplasma parvum serovar 3 (strain ATCC 27815 / 27 / NCTC 11736), this protein is Ribosome-recycling factor.